The sequence spans 161 residues: Phosphopantetheine adenylyltransferase (161 aa).

Thr-10 serves as a coordination point for substrate. ATP contacts are provided by residues Thr-10 to Phe-11 and His-18. Residues Lys-42, Leu-74, and Arg-88 each coordinate substrate. ATP contacts are provided by residues Gly-89–Arg-91, Glu-99, and Tyr-123–Thr-129.

It belongs to the bacterial CoaD family. As to quaternary structure, homohexamer. The cofactor is Mg(2+).

Its subcellular location is the cytoplasm. The enzyme catalyses (R)-4'-phosphopantetheine + ATP + H(+) = 3'-dephospho-CoA + diphosphate. Its pathway is cofactor biosynthesis; coenzyme A biosynthesis; CoA from (R)-pantothenate: step 4/5. Functionally, reversibly transfers an adenylyl group from ATP to 4'-phosphopantetheine, yielding dephospho-CoA (dPCoA) and pyrophosphate. The polypeptide is Phosphopantetheine adenylyltransferase (Aquifex aeolicus (strain VF5)).